The chain runs to 225 residues: Membrane protein (225 aa).

Over 1 to 20 (MPNETNCTLDFEQSVQLFKE) the chain is Virion surface. A helical membrane pass occupies residues 21–41 (YNLFITAFLLFLTIILQYGYA). The Intravirion segment spans residues 42-51 (TRTKVIYTLK). A helical transmembrane segment spans residues 52-72 (MIVLWCFWPLNIAVGVISCTY). Residues 73–77 (PPNTG) lie on the Virion surface side of the membrane. Residues 78 to 98 (GLVVAIILTVFACLSFVGYWI) traverse the membrane as a helical segment. Topologically, residues 99 to 225 (QSIRLFKRCR…VATGGSSLYT (127 aa)) are intravirion.

Belongs to the gammacoronaviruses M protein family. In terms of assembly, homomultimer. Interacts with envelope E protein in the budding compartment of the host cell, which is located between endoplasmic reticulum and the Golgi complex. Forms a complex with HE and S proteins. Interacts with nucleocapsid N protein. This interaction probably participates in RNA packaging into the virus.

Its subcellular location is the virion membrane. It is found in the host Golgi apparatus membrane. Component of the viral envelope that plays a central role in virus morphogenesis and assembly via its interactions with other viral proteins. This Avian infectious bronchitis virus (strain Beaudette US) (IBV) protein is Membrane protein.